The chain runs to 78 residues: MDTASVIIDLTVSSLGGYNKCLNIKHAKSQCRPSSLLISSLENVSPGIRPRFLSQNMEANDPEKKIPSTAAKAISLSP.

The disordered stretch occupies residues 58-78 (EANDPEKKIPSTAAKAISLSP).

This is an uncharacterized protein from Vaccinia virus (strain Copenhagen) (VACV).